The primary structure comprises 241 residues: MTLVNPSEKLILALDGMDVLEALSFIDKVPDLIWVKVGLELFATSGLEIFTELRARGKKVFLDLKFHDIPNTMAGACYRAARNGAELITVHACAGSKALLVANEAAKKGAASVGLPSPTLLGVTVLTSWTSYEFGDELDIHHSLEKRVEHLAQLAFKAGLGGCICSPCEVKRLREIFPESFELITPGIRFLDSGLDDQARVMQPRDAFTSGASRLVLGRIITRSTNPAEAFTRVCRDIQTD.

Residues Asp15, Lys36, 63–72 (DLKFHDIPNT), Thr127, Arg189, Gln198, Gly218, and Arg219 contribute to the substrate site. Lys65 serves as the catalytic Proton donor.

The protein belongs to the OMP decarboxylase family. Type 1 subfamily. In terms of assembly, homodimer.

It carries out the reaction orotidine 5'-phosphate + H(+) = UMP + CO2. Its pathway is pyrimidine metabolism; UMP biosynthesis via de novo pathway; UMP from orotate: step 2/2. Functionally, catalyzes the decarboxylation of orotidine 5'-monophosphate (OMP) to uridine 5'-monophosphate (UMP). The chain is Orotidine 5'-phosphate decarboxylase from Prochlorococcus marinus (strain MIT 9211).